We begin with the raw amino-acid sequence, 546 residues long: ATP synthase subunit alpha (546 aa).

Residue 173 to 180 (GDRQTGKT) participates in ATP binding. A disordered region spans residues 520-546 (VDKKTAPKSVTPVDQEQIKAGKAQEKK). Over residues 535 to 546 (EQIKAGKAQEKK) the composition is skewed to basic and acidic residues.

It belongs to the ATPase alpha/beta chains family. F-type ATPases have 2 components, CF(1) - the catalytic core - and CF(0) - the membrane proton channel. CF(1) has five subunits: alpha(3), beta(3), gamma(1), delta(1), epsilon(1). CF(0) has three main subunits: a(1), b(2) and c(9-12). The alpha and beta chains form an alternating ring which encloses part of the gamma chain. CF(1) is attached to CF(0) by a central stalk formed by the gamma and epsilon chains, while a peripheral stalk is formed by the delta and b chains.

It localises to the cell membrane. It catalyses the reaction ATP + H2O + 4 H(+)(in) = ADP + phosphate + 5 H(+)(out). Produces ATP from ADP in the presence of a proton gradient across the membrane. The alpha chain is a regulatory subunit. The sequence is that of ATP synthase subunit alpha from Bifidobacterium animalis subsp. lactis (strain AD011).